Consider the following 118-residue polypeptide: Putative pterin-4-alpha-carbinolamine dehydratase (118 aa).

It belongs to the pterin-4-alpha-carbinolamine dehydratase family.

It catalyses the reaction (4aS,6R)-4a-hydroxy-L-erythro-5,6,7,8-tetrahydrobiopterin = (6R)-L-erythro-6,7-dihydrobiopterin + H2O. This chain is Putative pterin-4-alpha-carbinolamine dehydratase (phhB), found in Xanthomonas axonopodis pv. citri (strain 306).